Here is a 313-residue protein sequence, read N- to C-terminus: MKLTDNVLRSFRVAKVFRENSDKINCFDFSPTGETVISSSDDDSIVLYDCQEGKPKRTLYSKKYGVDLIRYTHAANTVVYSSNKIDDTIRYLSLHDNKYIRYFPGHSKRVVSLSMSPVDDTFISGSLDKTIRLWDLRSPNCQGLMHLQGKPVCSFDPEGLIFAAGINSEMVKLYDLRSFDKGPFATFKMQYDRTCEWTALKFSNDGKLILLSTNGGFLRLVDAFKGAVMHTFGGYNNSKAVTLEASFTPDSQFIMIGSEDGKIHVWNCESGMKVAVLDGKHTGPITCLQFNPKFMTFASACSNMAFWLPTIDD.

WD repeat units follow at residues 19–58 (ENSDKINCFDFSPTGETVISSSDDDSIVLYDCQEGKPKRT), 105–144 (GHSKRVVSLSMSPVDDTFISGSLDKTIRLWDLRSPNCQGL), 146–184 (HLQGKPVCSFDPEGLIFAAGINSEMVKLYDLRSFDKGPF), 192–231 (DRTCEWTALKFSNDGKLILLSTNGGFLRLVDAFKGAVMHT), 236–276 (NNSK…KVAV), and 280–313 (KHTGPITCLQFNPKFMTFASACSNMAFWLPTIDD).

The protein belongs to the WD repeat SWD2 family. Component of the SET1/COMPASS complex. Component of the PNUTS-PP1 phosphatase complex.

Its subcellular location is the nucleus. The protein localises to the chromosome. It localises to the cytoplasm. In terms of biological role, regulatory component of the SET1/COMPASS complex implicated in the tethering of this complex to transcriptional start sites of active genes. Facilitates histone H3 'Lys-4' methylation (H3K4me) via recruitment of the SETD1A or SETD1B to the 'Ser-5' phosphorylated C-terminal domain (CTD) of RNA polymerase II large subunit (POLR2A). Component of the PNUTS-PP1 protein phosphatase complex, a protein phosphatase 1 (PP1) complex that promotes RNA polymerase II transcription pause-release, allowing transcription elongation. In Xenopus laevis (African clawed frog), this protein is WD repeat-containing protein 82-B (wdr82-b).